The sequence spans 315 residues: tRNA uridine(34) hydroxylase (315 aa).

A Rhodanese domain is found at 136 to 230 (SDPETLVIDT…YLEEIPPEES (95 aa)). C190 (cysteine persulfide intermediate) is an active-site residue.

Belongs to the TrhO family.

It catalyses the reaction uridine(34) in tRNA + AH2 + O2 = 5-hydroxyuridine(34) in tRNA + A + H2O. In terms of biological role, catalyzes oxygen-dependent 5-hydroxyuridine (ho5U) modification at position 34 in tRNAs. The protein is tRNA uridine(34) hydroxylase of Sinorhizobium medicae (strain WSM419) (Ensifer medicae).